The sequence spans 341 residues: Transcription factor VIP1 (341 aa).

3 disordered regions span residues 1–33, 59–106, and 135–156; these read MEGG…HRRA, SLDF…PEAR, and SSGE…DGEM. The segment at 1 to 162 is necessary and sufficient for transient T-DNA transformation end expression; that stretch reads MEGGGRGPNQ…DGEMSSASFN (162 aa). Residues 15–24 show a composition bias toward basic and acidic residues; the sequence is EIEHMPEAPR. The span at 71–80 shows a compositional bias: low complexity; sequence QSQQQPQASP. S79 carries the phosphoserine modification. The tract at residues 163 to 341 is involved in homomultimerization and histone H2A binding; it reads IESILASVSG…PSYMDFTKRG (179 aa). The bZIP domain occupies 194–257; the sequence is DPKRAKRILA…SELNTENKHL (64 aa). The tract at residues 196–217 is basic motif; sequence KRAKRILANRQSAARSKERKIR. Residues 198–205 carry the Nuclear localization signal motif; the sequence is AKRILANR. Residues 222 to 257 are leucine-zipper; the sequence is LERKVQTLQNEATTLSAQVTMLQRGTSELNTENKHL. Over residues 307–331 the composition is skewed to polar residues; sequence SQQSAMNQFGNKTNQQMSTNGQPSL. The segment at 307–341 is disordered; it reads SQQSAMNQFGNKTNQQMSTNGQPSLPSYMDFTKRG.

The protein belongs to the bZIP family. As to quaternary structure, forms homomultimers. Interacts with Agrobacterium tumefaciens VirE2 and mediates its translocation to the host nucleus. Binds to VIP2. Forms a complex made of Agrobacterium VirE2, VIP1, VIP2 and single-stranded DNA (ssDNA). The interaction with KAP1 mediates its nuclear import. Binds to the H2A histone RAT5. Interacts with MPK3 and Agrobacterium virF. Forms a complex made of VIP1, VBF and Agrobacterium virE2. Interacts with SCF(VBF) E3 ubiquitin ligase complex. Binds directly to VBF. Forms heterodimers with BZIP34 and BZIP61. In terms of processing, phosphorylated by MPK3. This phosphorylation promotes nuclear localization. Mostly expressed in dividing cells, present in leaves, roots and seedlings.

The protein localises to the cytoplasm. It localises to the nucleus. Its function is as follows. Transcription activator that binds specifically to the VIP1 response elements (VREs) DNA sequence 5'-ACNGCT-3' found in some stress genes (e.g. TRX8 and MYB44), when phosphorylated/activated by MPK3. Required for Agrobacterium VirE2 nuclear import and tumorigenicity. Promotes transient expression of T-DNA in early stages by interacting with VirE2 in complex with the T-DNA and facilitating its translocation to the nucleus, and mediates stable genetic transformation by Agrobacterium by binding H2A histone. Prevents cell differentiation and shoot formation. Limits sulfate utilization efficiency (SUE) and sulfate uptake, especially in low-sulfur conditions. Plays a role in osmosensory response by binding to the 5'-AGCTGT/G-3' DNA sequence found in the promoters of the hypoosmolarity-responsive genes CYP707A1 and CYP707A3. Involved in the negative regulation of touch-induced root bending and salt-dependent root bending. The sequence is that of Transcription factor VIP1 from Arabidopsis thaliana (Mouse-ear cress).